The primary structure comprises 440 residues: Protein dumpy-20 (440 aa).

The disordered stretch occupies residues 96–119; sequence ILSDPSLHGSNSSSSTSDVGSSVD. Residues 98 to 119 show a composition bias toward low complexity; sequence SDPSLHGSNSSSSTSDVGSSVD. 2 consecutive BED-type zinc fingers follow at residues 137-186 and 350-399; these read PTEN…YQKV and KTEH…YNDV. Positions 156, 159, 174, 179, 369, 372, 387, and 392 each coordinate Zn(2+).

In terms of biological role, may be directly or indirectly involved in cuticle function. This Caenorhabditis elegans protein is Protein dumpy-20 (dpy-20).